Consider the following 305-residue polypeptide: Taste receptor type 2 member 13 (305 aa).

Over 1 to 7 the chain is Extracellular; that stretch reads MGSSLYD. The chain crosses the membrane as a helical span at residues 8-28; that stretch reads ILTIVMIAEFIFGNVTNGFIV. Over 29–42 the chain is Cytoplasmic; that stretch reads LTNCIAWLSKRTLS. The chain crosses the membrane as a helical span at residues 43 to 63; that stretch reads FIGWIQLFLAISRVVLIWEML. Residues 64-88 are Extracellular-facing; it reads LAWLKYMKYSFSYLAGTELRVMMLT. Residues 89–109 traverse the membrane as a helical segment; the sequence is WVVSNHFSLWLATILSIFYLL. The Cytoplasmic segment spans residues 110–128; sequence KIASFSRPVFLYLKWRVKK. Residues 129–149 form a helical membrane-spanning segment; that stretch reads VLLLILLGNLIFLMFNILQIN. Topologically, residues 150–182 are extracellular; sequence THIEDWMDQYKRNITWDSRVNEFVGFSNLVLLE. N-linked (GlcNAc...) asparagine glycosylation is present at Asn162. The chain crosses the membrane as a helical span at residues 183-203; that stretch reads MIMFSVTPFTVALVSFILLIF. Topologically, residues 204 to 232 are cytoplasmic; that stretch reads SLWKHLQKMHLSSRGERDPSTKAHVNALR. A helical transmembrane segment spans residues 233–253; the sequence is IMVSFLLLYATYFISFFISLI. Over 254–262 the chain is Extracellular; the sequence is PMAHKKGLD. The helical transmembrane segment at 263–283 threads the bilayer; the sequence is LMFSLTVGLFYPSSHSFILIL. Over 284-305 the chain is Cytoplasmic; it reads GHSNLRHSSCLVITYLRCKEKD.

This sequence belongs to the G-protein coupled receptor T2R family. As to expression, expressed in subsets of taste receptor cells of the tongue and palate epithelium and exclusively in gustducin-positive cells. Expressed in 15% taste bud cells in circumvallate and foliate papillae but only in 2% in fungiform papillae. Expressed in the duodenum, antrum and fundus (part of the stomach).

It localises to the membrane. In terms of biological role, receptor that may play a role in the perception of bitterness and is gustducin-linked. May play a role in sensing the chemical composition of the gastrointestinal content. The activity of this receptor may stimulate alpha gustducin, mediate PLC-beta-2 activation and lead to the gating of TRPM5. In Rattus norvegicus (Rat), this protein is Taste receptor type 2 member 13 (Tas2r13).